We begin with the raw amino-acid sequence, 381 residues long: Diguanylate cyclase DosC (381 aa).

Position 98 (H98) interacts with heme. The GGDEF domain occupies 325–381 (TPLSVLIIDVDKFKEINDTWGHNTGDEILRKVSFLSQKRLVKSKILGAGSSRKLAVS). D333 contacts Mg(2+). 2 residues coordinate substrate: N341 and D350.

It depends on heme as a cofactor. Mg(2+) serves as cofactor.

It catalyses the reaction 2 GTP = 3',3'-c-di-GMP + 2 diphosphate. It participates in purine metabolism; 3',5'-cyclic di-GMP biosynthesis. Globin-coupled heme-based oxygen sensor protein displaying diguanylate cyclase (DGC) activity in response to oxygen availability. Thus, catalyzes the synthesis of cyclic diguanylate (c-di-GMP) via the condensation of 2 GTP molecules. Cyclic-di-GMP is a second messenger which controls cell surface-associated traits in bacteria. The protein is Diguanylate cyclase DosC (dosC) of Shigella flexneri serotype 5b (strain 8401).